The sequence spans 354 residues: MSRSTYSLEQLADFLKVEFQGNGATLLSGVEEIEEAKTAHITFLDNEKYAKHLKSSEAGAIIISRTQFQKYRDLNKNFLITSESPSLVFQKCLELFITPVDSGFPGIHPTAVIHPTAIIEDHVCIEPYAVVCQHAHVGSACHIGSGSVIGAYSTVGQHSYIHPRVVIRERVSIGKRVIIQPGAVIGSCGFGYVTSAFGQHKHLKHLGKVIIEDDVEIGANTTIDRGRFKHSVVREGSKIDNLVQIAHQVEVGQHSMIVAQAGIAGSTKIGNHVIIGGQAGITGHICIADHVIMMAQTGVTKSITSPGIYGGAPARPYQEIHRQVAKVRNLPRLEERIAALEKLVQKLEALSEQH.

Catalysis depends on histidine 247, which acts as the Proton acceptor.

This sequence belongs to the transferase hexapeptide repeat family. LpxD subfamily. As to quaternary structure, homotrimer.

The catalysed reaction is a UDP-3-O-[(3R)-3-hydroxyacyl]-alpha-D-glucosamine + a (3R)-hydroxyacyl-[ACP] = a UDP-2-N,3-O-bis[(3R)-3-hydroxyacyl]-alpha-D-glucosamine + holo-[ACP] + H(+). It functions in the pathway bacterial outer membrane biogenesis; LPS lipid A biosynthesis. Its function is as follows. Catalyzes the N-acylation of UDP-3-O-acylglucosamine using 3-hydroxyacyl-ACP as the acyl donor. Is involved in the biosynthesis of lipid A, a phosphorylated glycolipid that anchors the lipopolysaccharide to the outer membrane of the cell. This is UDP-3-O-acylglucosamine N-acyltransferase from Chlamydia trachomatis serovar L2b (strain UCH-1/proctitis).